A 353-amino-acid chain; its full sequence is Uroporphyrinogen decarboxylase (353 aa).

Substrate is bound by residues 30 to 34 (RQAGR), Asp-79, Tyr-154, Ser-209, and His-332.

This sequence belongs to the uroporphyrinogen decarboxylase family. In terms of assembly, homodimer.

The protein resides in the cytoplasm. It catalyses the reaction uroporphyrinogen III + 4 H(+) = coproporphyrinogen III + 4 CO2. Its pathway is porphyrin-containing compound metabolism; protoporphyrin-IX biosynthesis; coproporphyrinogen-III from 5-aminolevulinate: step 4/4. In terms of biological role, catalyzes the decarboxylation of four acetate groups of uroporphyrinogen-III to yield coproporphyrinogen-III. The sequence is that of Uroporphyrinogen decarboxylase from Mycobacterium ulcerans (strain Agy99).